A 284-amino-acid polypeptide reads, in one-letter code: 2-dehydro-3-deoxyphosphooctonate aldolase (284 aa).

This sequence belongs to the KdsA family.

The protein localises to the cytoplasm. The catalysed reaction is D-arabinose 5-phosphate + phosphoenolpyruvate + H2O = 3-deoxy-alpha-D-manno-2-octulosonate-8-phosphate + phosphate. The protein operates within carbohydrate biosynthesis; 3-deoxy-D-manno-octulosonate biosynthesis; 3-deoxy-D-manno-octulosonate from D-ribulose 5-phosphate: step 2/3. It functions in the pathway bacterial outer membrane biogenesis; lipopolysaccharide biosynthesis. This Escherichia coli O157:H7 protein is 2-dehydro-3-deoxyphosphooctonate aldolase.